We begin with the raw amino-acid sequence, 77 residues long: Acyl carrier protein (77 aa).

Residues 1-76 enclose the Carrier domain; the sequence is MATFDDVKAV…DVVNYIDNLK (76 aa). Position 36 is an O-(pantetheine 4'-phosphoryl)serine (serine 36).

The protein belongs to the acyl carrier protein (ACP) family. In terms of processing, 4'-phosphopantetheine is transferred from CoA to a specific serine of apo-ACP by AcpS. This modification is essential for activity because fatty acids are bound in thioester linkage to the sulfhydryl of the prosthetic group.

It is found in the cytoplasm. The protein operates within lipid metabolism; fatty acid biosynthesis. Its function is as follows. Carrier of the growing fatty acid chain in fatty acid biosynthesis. The chain is Acyl carrier protein from Campylobacter jejuni subsp. doylei (strain ATCC BAA-1458 / RM4099 / 269.97).